The sequence spans 432 residues: Probable protein phosphatase 2C 33 (432 aa).

Positions 27–298 constitute a PPM-type phosphatase domain; the sequence is GGGSERPLVR…DDTTCVVVDI (272 aa). Asp74, Gly75, Asp250, and Asp289 together coordinate Mn(2+).

This sequence belongs to the PP2C family. Mg(2+) is required as a cofactor. The cofactor is Mn(2+).

It catalyses the reaction O-phospho-L-seryl-[protein] + H2O = L-seryl-[protein] + phosphate. The enzyme catalyses O-phospho-L-threonyl-[protein] + H2O = L-threonyl-[protein] + phosphate. This chain is Probable protein phosphatase 2C 33, found in Oryza sativa subsp. japonica (Rice).